A 707-amino-acid polypeptide reads, in one-letter code: Pheromone-processing carboxypeptidase KEX1 (707 aa).

Positions 1-17 (MLLSVFIILINTLFVLA) are cleaved as a signal peptide. The Lumenal portion of the chain corresponds to 18–564 (IPPKEGSDNN…EESTSSKFTR (547 aa)). Residues Asn-64 and Asn-121 are each glycosylated (N-linked (GlcNAc...) asparagine). The active site involves Ser-183. Asn-293 and Asn-378 each carry an N-linked (GlcNAc...) asparagine glycan. Residue Asp-393 is part of the active site. N-linked (GlcNAc...) asparagine glycans are attached at residues Asn-440 and Asn-448. The active site involves His-451. Residues 496 to 557 (GQEIPADESS…ASFIPEPEES (62 aa)) are disordered. Over residues 503-533 (ESSKPIEDKPDDKPIEDKPEETKPEQTKPED) the composition is skewed to basic and acidic residues. The segment covering 536 to 549 (SSSTSEIIPTSEAS) has biased composition (low complexity). A helical membrane pass occupies residues 565-585 (LIQLGVIFIIFWGVYILYVSY). Residues 586-707 (RARPSSIIKK…GNPKKTESKS (122 aa)) lie on the Cytoplasmic side of the membrane. The tract at residues 644–707 (NTSNRGRYAP…GNPKKTESKS (64 aa)) is disordered. A compositionally biased stretch (acidic residues) spans 683–694 (SDDDEDDDEDVE). Basic and acidic residues predominate over residues 695–707 (THEGNPKKTESKS).

It belongs to the peptidase S10 family.

It is found in the golgi apparatus. The protein localises to the trans-Golgi network membrane. It catalyses the reaction Preferential release of a C-terminal arginine or lysine residue.. Functionally, protease with a carboxypeptidase B-like function involved in the C-terminal processing of the lysine and arginine residues from protein precursors. Promotes cell fusion and is involved in the programmed cell death. This is Pheromone-processing carboxypeptidase KEX1 (KEX1) from Candida tropicalis (strain ATCC MYA-3404 / T1) (Yeast).